The chain runs to 108 residues: Pyrimidine/purine nucleoside phosphorylase (108 aa).

Belongs to the nucleoside phosphorylase PpnP family.

It catalyses the reaction a purine D-ribonucleoside + phosphate = a purine nucleobase + alpha-D-ribose 1-phosphate. The enzyme catalyses adenosine + phosphate = alpha-D-ribose 1-phosphate + adenine. The catalysed reaction is cytidine + phosphate = cytosine + alpha-D-ribose 1-phosphate. It carries out the reaction guanosine + phosphate = alpha-D-ribose 1-phosphate + guanine. It catalyses the reaction inosine + phosphate = alpha-D-ribose 1-phosphate + hypoxanthine. The enzyme catalyses thymidine + phosphate = 2-deoxy-alpha-D-ribose 1-phosphate + thymine. The catalysed reaction is uridine + phosphate = alpha-D-ribose 1-phosphate + uracil. It carries out the reaction xanthosine + phosphate = alpha-D-ribose 1-phosphate + xanthine. Its function is as follows. Catalyzes the phosphorolysis of diverse nucleosides, yielding D-ribose 1-phosphate and the respective free bases. Can use uridine, adenosine, guanosine, cytidine, thymidine, inosine and xanthosine as substrates. Also catalyzes the reverse reactions. The chain is Pyrimidine/purine nucleoside phosphorylase from Polaromonas naphthalenivorans (strain CJ2).